Here is a 207-residue protein sequence, read N- to C-terminus: Small ribosomal subunit protein uS4 (207 aa).

Positions 97-165 constitute an S4 RNA-binding domain; it reads SRLDNLVFRM…VKLALESKAV (69 aa).

This sequence belongs to the universal ribosomal protein uS4 family. Part of the 30S ribosomal subunit. Contacts protein S5. The interaction surface between S4 and S5 is involved in control of translational fidelity.

Its function is as follows. One of the primary rRNA binding proteins, it binds directly to 16S rRNA where it nucleates assembly of the body of the 30S subunit. In terms of biological role, with S5 and S12 plays an important role in translational accuracy. This Mycoplasmoides gallisepticum (strain R(low / passage 15 / clone 2)) (Mycoplasma gallisepticum) protein is Small ribosomal subunit protein uS4.